The chain runs to 938 residues: Isoleucine--tRNA ligase (938 aa).

The 'HIGH' region motif lies at 65–75 (PYANGSIHIGH). Glutamate 568 provides a ligand contact to L-isoleucyl-5'-AMP. The short motif at 609 to 613 (KMSKS) is the 'KMSKS' region element. ATP is bound at residue lysine 612. Positions 905, 908, 921, and 924 each coordinate Zn(2+).

It belongs to the class-I aminoacyl-tRNA synthetase family. IleS type 1 subfamily. Monomer. It depends on Zn(2+) as a cofactor.

The protein resides in the cytoplasm. It carries out the reaction tRNA(Ile) + L-isoleucine + ATP = L-isoleucyl-tRNA(Ile) + AMP + diphosphate. Its function is as follows. Catalyzes the attachment of isoleucine to tRNA(Ile). As IleRS can inadvertently accommodate and process structurally similar amino acids such as valine, to avoid such errors it has two additional distinct tRNA(Ile)-dependent editing activities. One activity is designated as 'pretransfer' editing and involves the hydrolysis of activated Val-AMP. The other activity is designated 'posttransfer' editing and involves deacylation of mischarged Val-tRNA(Ile). This is Isoleucine--tRNA ligase from Mannheimia succiniciproducens (strain KCTC 0769BP / MBEL55E).